Reading from the N-terminus, the 180-residue chain is Large ribosomal subunit protein uL6 (180 aa).

Belongs to the universal ribosomal protein uL6 family. In terms of assembly, part of the 50S ribosomal subunit.

Its function is as follows. This protein binds to the 23S rRNA, and is important in its secondary structure. It is located near the subunit interface in the base of the L7/L12 stalk, and near the tRNA binding site of the peptidyltransferase center. The sequence is that of Large ribosomal subunit protein uL6 from Picrophilus torridus (strain ATCC 700027 / DSM 9790 / JCM 10055 / NBRC 100828 / KAW 2/3).